We begin with the raw amino-acid sequence, 32 residues long: Defensin-3 (32 aa).

3 disulfide bridges follow: Cys3–Cys31, Cys5–Cys20, and Cys10–Cys30.

Its subcellular location is the secreted. Has antibacterial activity against the Gram-negative bacterium E.coli and the Gram-positive bacteria L.monocytogenes and S.aureus. Has antifungal activity against C.albicans. The chain is Defensin-3 from Papio hamadryas (Hamadryas baboon).